The sequence spans 117 residues: V-type proton ATPase subunit G (117 aa).

It belongs to the V-ATPase G subunit family. V-ATPase is a heteromultimeric enzyme made up of two complexes: the ATP-hydrolytic V1 complex and the proton translocation V0 complex. The V1 complex consists of three catalytic AB heterodimers that form a heterohexamer, three peripheral stalks each consisting of EG heterodimers, one central rotor including subunits D and F, and the regulatory subunits C and H. The proton translocation complex V0 consists of the proton transport subunit a, a ring of proteolipid subunits c9c'', rotary subunit d, subunits e and f, and the accessory subunits VhaAC45 and ATP6AP2.

Functionally, subunit of the V1 complex of vacuolar(H+)-ATPase (V-ATPase), a multisubunit enzyme composed of a peripheral complex (V1) that hydrolyzes ATP and a membrane integral complex (V0) that translocates protons. V-ATPase is responsible for acidifying and maintaining the pH of intracellular compartments and in some cell types, is targeted to the plasma membrane, where it is responsible for acidifying the extracellular environment. In enterocytes, acts as part of a pHCl-2 sensory pathway which mediates Tor-dependent larval growth and metabolism in response to zinc availability. Likely acts in maintaining enterocyte lysosomal acidification which consequently promotes Tor activation at the lysosome membrane. This is V-type proton ATPase subunit G (Vha13) from Drosophila melanogaster (Fruit fly).